Reading from the N-terminus, the 118-residue chain is UPF0344 protein YisL (118 aa).

A run of 4 helical transmembrane segments spans residues 4–24 (LHIT…SLYS), 33–53 (ITHM…AELF), 62–82 (EYAG…MLLI), and 93–113 (LWVG…HLPI).

The protein belongs to the UPF0344 family.

The protein localises to the cell membrane. In Bacillus subtilis (strain 168), this protein is UPF0344 protein YisL (yisL).